The primary structure comprises 59 residues: DNA gyrase inhibitor YacG (59 aa).

Residues Cys7, Cys10, Cys25, and Cys29 each contribute to the Zn(2+) site.

It belongs to the DNA gyrase inhibitor YacG family. As to quaternary structure, interacts with GyrB. It depends on Zn(2+) as a cofactor.

Functionally, inhibits all the catalytic activities of DNA gyrase by preventing its interaction with DNA. Acts by binding directly to the C-terminal domain of GyrB, which probably disrupts DNA binding by the gyrase. This chain is DNA gyrase inhibitor YacG, found in Geobacter sulfurreducens (strain ATCC 51573 / DSM 12127 / PCA).